Here is a 204-residue protein sequence, read N- to C-terminus: N-(5'-phosphoribosyl)anthranilate isomerase (204 aa).

This sequence belongs to the TrpF family.

The enzyme catalyses N-(5-phospho-beta-D-ribosyl)anthranilate = 1-(2-carboxyphenylamino)-1-deoxy-D-ribulose 5-phosphate. It participates in amino-acid biosynthesis; L-tryptophan biosynthesis; L-tryptophan from chorismate: step 3/5. This Bacillus anthracis (strain A0248) protein is N-(5'-phosphoribosyl)anthranilate isomerase.